We begin with the raw amino-acid sequence, 962 residues long: Putative primase C962R (962 aa).

The SF3 helicase domain occupies Glu607–Lys775. Gly636 to Thr643 lines the ATP pocket.

This sequence belongs to the asfivirus helicase C962R family.

This is Putative primase C962R from African swine fever virus (strain Badajoz 1971 Vero-adapted) (Ba71V).